Reading from the N-terminus, the 505-residue chain is Histidine ammonia-lyase (505 aa).

A cross-link (5-imidazolinone (Ala-Gly)) is located at residues 141-143 (ASG). A 2,3-didehydroalanine (Ser) modification is found at S142.

It belongs to the PAL/histidase family. Post-translationally, contains an active site 4-methylidene-imidazol-5-one (MIO), which is formed autocatalytically by cyclization and dehydration of residues Ala-Ser-Gly.

It is found in the cytoplasm. The catalysed reaction is L-histidine = trans-urocanate + NH4(+). It participates in amino-acid degradation; L-histidine degradation into L-glutamate; N-formimidoyl-L-glutamate from L-histidine: step 1/3. The sequence is that of Histidine ammonia-lyase from Bacillus mycoides (strain KBAB4) (Bacillus weihenstephanensis).